The chain runs to 288 residues: Polyamine aminopropyltransferase (288 aa).

The PABS domain occupies 9-238; it reads ETLHDQFGQY…GIMTFAWATD (230 aa). An S-methyl-5'-thioadenosine-binding site is contributed by Q33. 2 residues coordinate spermidine: H64 and D88. S-methyl-5'-thioadenosine is bound by residues E108 and 140-141; that span reads DG. D158 serves as the catalytic Proton acceptor. 158-161 is a spermidine binding site; sequence DCTD. S-methyl-5'-thioadenosine is bound at residue P165.

It belongs to the spermidine/spermine synthase family. In terms of assembly, homodimer or homotetramer.

It localises to the cytoplasm. It catalyses the reaction S-adenosyl 3-(methylsulfanyl)propylamine + putrescine = S-methyl-5'-thioadenosine + spermidine + H(+). It functions in the pathway amine and polyamine biosynthesis; spermidine biosynthesis; spermidine from putrescine: step 1/1. Its function is as follows. Catalyzes the irreversible transfer of a propylamine group from the amino donor S-adenosylmethioninamine (decarboxy-AdoMet) to putrescine (1,4-diaminobutane) to yield spermidine. This Shigella sonnei (strain Ss046) protein is Polyamine aminopropyltransferase.